The chain runs to 274 residues: Diaminopimelate epimerase (274 aa).

Residues Asn-11, Gln-44, and Asn-64 each coordinate substrate. Cys-73 acts as the Proton donor in catalysis. Residues 74–75 (GN), Asn-157, Asn-190, and 208–209 (ER) each bind substrate. Cys-217 serves as the catalytic Proton acceptor. 218–219 (GS) is a substrate binding site.

The protein belongs to the diaminopimelate epimerase family. Homodimer.

The protein resides in the cytoplasm. The enzyme catalyses (2S,6S)-2,6-diaminopimelate = meso-2,6-diaminopimelate. The protein operates within amino-acid biosynthesis; L-lysine biosynthesis via DAP pathway; DL-2,6-diaminopimelate from LL-2,6-diaminopimelate: step 1/1. Functionally, catalyzes the stereoinversion of LL-2,6-diaminopimelate (L,L-DAP) to meso-diaminopimelate (meso-DAP), a precursor of L-lysine and an essential component of the bacterial peptidoglycan. The chain is Diaminopimelate epimerase from Escherichia coli O6:H1 (strain CFT073 / ATCC 700928 / UPEC).